Here is a 261-residue protein sequence, read N- to C-terminus: 14-3-3 protein 9 (261 aa).

Residues 239–261 (PEDAEDAQKGDATNKAGGGEDAE) form a disordered region.

The protein belongs to the 14-3-3 family. In terms of assembly, homodimer.

In Solanum lycopersicum (Tomato), this protein is 14-3-3 protein 9 (TFT9).